The chain runs to 539 residues: T-complex protein 1 subunit zeta (539 aa).

The protein belongs to the TCP-1 chaperonin family. As to quaternary structure, heterooligomeric complex of about 850 to 900 kDa that forms two stacked rings, 12 to 16 nm in diameter.

It is found in the cytoplasm. Its function is as follows. Molecular chaperone; assists the folding of proteins upon ATP hydrolysis. Known to play a role, in vitro, in the folding of actin and tubulin. The protein is T-complex protein 1 subunit zeta (cct6) of Dictyostelium discoideum (Social amoeba).